The chain runs to 340 residues: Putative RRN3-like protein RRN3P2 (340 aa).

The protein belongs to the RRN3 family.

The protein is Putative RRN3-like protein RRN3P2 (RRN3P2) of Homo sapiens (Human).